The primary structure comprises 348 residues: MAPRTLLLVLSGALALTETWAGSHSLRYFSTAVSRPGRREPQYRYIAVEYVDDTQFLRFDSDAAIPRMEPRAPWVEQEGPQYWERTTGYAKANARTDRVALRKLLLRYNQSEAGSHTLQGMNGCDMGPDGRLLRGYHQHAYDGKDYISLNEDLRSWTAADTVARITQRFYEAEEYAEEFRTYLEGECLELLRRYLENGKETLQRADPPKAHVAHHPISDREATLRCWALGFYPAEITLTWQRDGEEQTQDTELVETRPAGDGTFQKWAAVVVPSGEEQRYTCHVQHEGLPQPLTLRWESSSQPTIPIVGIVAGLAVLAVVVTGAVVAAVMWRRKSSDRNRGSYSQPTM.

The signal sequence occupies residues Met1–Ala21. Residues Gly22–Ala113 form an alpha-1 region. The Extracellular portion of the chain corresponds to Gly22–Ile307. Asn109 is a glycosylation site (N-linked (GlcNAc...) asparagine). The alpha-2 stretch occupies residues Gly114–Ala205. 2 cysteine pairs are disulfide-bonded: Cys124/Cys187 and Cys226/Cys282. The interval Asp206–Trp297 is alpha-3. An Ig-like C1-type domain is found at Pro208–Arg296. The tract at residues Glu298–Ile307 is connecting peptide. Residues Val308–Trp331 form a helical membrane-spanning segment. The Cytoplasmic portion of the chain corresponds to Arg332–Met348.

The protein belongs to the MHC class I family. In terms of assembly, heterodimer of an alpha chain and a beta chain (beta-2-microglobulin).

It localises to the membrane. In terms of biological role, involved in the presentation of foreign antigens to the immune system. The polypeptide is Mamu class I histocompatibility antigen, alpha chain F (Mamu-F) (Macaca mulatta (Rhesus macaque)).